The primary structure comprises 425 residues: G protein-activated inward rectifier potassium channel 2 (425 aa).

Residues 1–91 are Cytoplasmic-facing; the sequence is MTMAKLTESM…IFTTLVDLKW (91 aa). Serine 18 and serine 25 each carry phosphoserine. The helical transmembrane segment at 92 to 116 threads the bilayer; the sequence is RFNLLIFVMVYTVTWLFFGMIWWLI. The Extracellular segment spans residues 117–140; it reads AYIRGDMDHIEDPSWTPCVTNLNG. Residues 141–152 constitute an intramembrane region (helical; Pore-forming); the sequence is FVSAFLFSIETE. An intramembrane region (pore-forming) is located at residues 153-159; sequence TTIGYGY. The Selectivity filter signature appears at 154–159; sequence TIGYGY. At 160-168 the chain is on the extracellular side; sequence RVITDKCPE. Residues 169 to 190 traverse the membrane as a helical segment; sequence GIILLLIQSVLGSIVNAFMVGC. Residues 191-425 are Cytoplasmic-facing; that stretch reads MFVKISQPKK…VANLENESKV (235 aa). The disordered stretch occupies residues 392-425; the sequence is NQHAELETEEEEKNPEELTERNGDVANLENESKV. Positions 422–425 match the PDZ-binding motif; sequence ESKV.

It belongs to the inward rectifier-type potassium channel (TC 1.A.2.1) family. KCNJ6 subfamily. Associates with KCNJ3/GIRK1to form a G-protein-activated heteromultimer pore-forming unit. Associates with KCNJ5/GRIK4 to form a G-protein-activated heteromultimer pore-forming unit. The resulting inward current is much larger. Interacts (via PDZ-binding motif) with SNX27 (via PDZ domain); the interaction is required when endocytosed to prevent degradation in lysosomes and promote recycling to the plasma membrane. As to quaternary structure, associates with KCNJ3/GRIK1 to form a G-protein-activated heteromultimer pore-forming unit. In terms of assembly, associates with KCNJ3/GRIK1 to form a G-protein-activated heteromultimer pore-forming unit. The resulting inward current is much larger. In terms of tissue distribution, expressed in the brain.

The protein localises to the membrane. It carries out the reaction K(+)(in) = K(+)(out). With respect to regulation, activated by phosphatidylinositol 4,5 biphosphate (PtdIns(4,5)P2). In terms of biological role, inward rectifier potassium channels are characterized by a greater tendency to allow potassium to flow into the cell rather than out of it. Their voltage dependence is regulated by the concentration of extracellular potassium; as external potassium is raised, the voltage range of the channel opening shifts to more positive voltages. The inward rectification is mainly due to the blockage of outward current by internal magnesium. This potassium channel is controlled by G proteins. Forms a functional channel in association with KCNJ3/GIRK1. Its function is as follows. Inward rectifier potassium channels are characterized by a greater tendency to allow potassium to flow into the cell rather than out of it. Their voltage dependence is regulated by the concentration of extracellular potassium; as external potassium is raised, the voltage range of the channel opening shifts to more positive voltages. The inward rectification is mainly due to the blockage of outward current by internal magnesium. This potassium channel is controlled by G proteins. In Mus musculus (Mouse), this protein is G protein-activated inward rectifier potassium channel 2 (Kcnj6).